Here is a 228-residue protein sequence, read N- to C-terminus: 7-cyano-7-deazaguanine synthase (228 aa).

Residue 16–26 participates in ATP binding; that stretch reads FSGGQDSTTCL. Zn(2+) is bound by residues Cys193, Cys201, Cys204, and Cys207.

This sequence belongs to the QueC family. Zn(2+) is required as a cofactor.

The enzyme catalyses 7-carboxy-7-deazaguanine + NH4(+) + ATP = 7-cyano-7-deazaguanine + ADP + phosphate + H2O + H(+). Its pathway is purine metabolism; 7-cyano-7-deazaguanine biosynthesis. Catalyzes the ATP-dependent conversion of 7-carboxy-7-deazaguanine (CDG) to 7-cyano-7-deazaguanine (preQ(0)). This chain is 7-cyano-7-deazaguanine synthase, found in Pasteurella multocida (strain Pm70).